The following is a 239-amino-acid chain: Exosome complex component Rrp41 (239 aa).

The disordered stretch occupies residues 1–21; that stretch reads MEERPERLISEDGLRLDGRKP.

The protein belongs to the RNase PH family. Rrp41 subfamily. As to quaternary structure, component of the archaeal exosome complex. Forms a hexameric ring-like arrangement composed of 3 Rrp41-Rrp42 heterodimers. The hexameric ring associates with a trimer of Rrp4 and/or Csl4 subunits.

It is found in the cytoplasm. Functionally, catalytic component of the exosome, which is a complex involved in RNA degradation. Has 3'-&gt;5' exoribonuclease activity. Can also synthesize heteromeric RNA-tails. This chain is Exosome complex component Rrp41, found in Methanopyrus kandleri (strain AV19 / DSM 6324 / JCM 9639 / NBRC 100938).